Reading from the N-terminus, the 63-residue chain is Large ribosomal subunit protein uL29 (63 aa).

The protein belongs to the universal ribosomal protein uL29 family.

This Pelagibacter ubique (strain HTCC1062) protein is Large ribosomal subunit protein uL29.